Consider the following 1029-residue polypeptide: Serine/threonine-protein kinase KSP1 (1029 aa).

In terms of domain architecture, Protein kinase spans 18–351 (YQKIEDISEG…TELQNLSEYT (334 aa)). ATP is bound by residues 27-35 (GSYGYVSLA) and lysine 47. Acidic residues predominate over residues 56–79 (GQYDGPQDDENDCDSSDCDDDEDT). A disordered region spans residues 56 to 105 (GQYDGPQDDENDCDSSDCDDDEDTKVDTDRHENENGNASSNNGSSREKKH). Positions 80 to 89 (KVDTDRHENE) are enriched in basic and acidic residues. Low complexity predominate over residues 90–99 (NGNASSNNGS). Aspartate 207 (proton acceptor) is an active-site residue. The interval 377–397 (VPPSSAPVSLPTPISSSNKQH) is disordered. Serine 416 and serine 419 each carry phosphoserine. Phosphothreonine is present on residues threonine 501, threonine 504, and threonine 526. Residue serine 529 is modified to Phosphoserine. The tract at residues 532 to 570 (HRYMEGFSNNNNKQYRQNRNYNNNNNNSNNNHGSNYNNF) is disordered. Residues 538 to 570 (FSNNNNKQYRQNRNYNNNNNNSNNNHGSNYNNF) show a composition bias toward low complexity. Residue serine 646 is modified to Phosphoserine. Residues 732–824 (STNHNNNGNN…SDSKELEQER (93 aa)) form a disordered region. Residues 734–743 (NHNNNGNNNH) are compositionally biased toward low complexity. The span at 744-754 (IDTNSTTNQYH) shows a compositional bias: polar residues. The segment covering 813–824 (HSSDSKELEQER) has biased composition (basic and acidic residues). Phosphoserine occurs at positions 845 and 884. Residues 949–978 (EYEGESDKMAHGKMEGGDNESSSTSPDERQ) are disordered. Residues 953-964 (ESDKMAHGKMEG) show a composition bias toward basic and acidic residues. The residue at position 1005 (threonine 1005) is a Phosphothreonine. At serine 1014 the chain carries Phosphoserine.

This sequence belongs to the protein kinase superfamily. Ser/Thr protein kinase family. CK2 subfamily. In terms of processing, phosphorylated by PKA in a TORC1-dependent manner. Phosphorylation at PKA consensus sites RRxS/T decreases upon rapamycin treatment.

It localises to the nucleus. It catalyses the reaction L-seryl-[protein] + ATP = O-phospho-L-seryl-[protein] + ADP + H(+). The enzyme catalyses L-threonyl-[protein] + ATP = O-phospho-L-threonyl-[protein] + ADP + H(+). Its function is as follows. May act on PRP20. The chain is Serine/threonine-protein kinase KSP1 (KSP1) from Saccharomyces cerevisiae (strain ATCC 204508 / S288c) (Baker's yeast).